The primary structure comprises 384 residues: Probable splicing factor YJU2B (384 aa).

Positions Met1–Asn28 are disordered. The stretch at Asn183–Ser212 forms a coiled coil. Positions Gly275–Cys331 are disordered. Residues Thr297–Cys331 show a composition bias toward basic and acidic residues.

It belongs to the CWC16 family.

The protein resides in the nucleus. In terms of biological role, may be involved in mRNA splicing. This is Probable splicing factor YJU2B (yju2b) from Xenopus laevis (African clawed frog).